A 179-amino-acid polypeptide reads, in one-letter code: Ribosome maturation factor RimM (179 aa).

Residues 99 to 174 form the PRC barrel domain; sequence EEDEYYFDQI…IMIVDLPEGL (76 aa).

The protein belongs to the RimM family. Binds ribosomal protein uS19.

The protein localises to the cytoplasm. Its function is as follows. An accessory protein needed during the final step in the assembly of 30S ribosomal subunit, possibly for assembly of the head region. Essential for efficient processing of 16S rRNA. May be needed both before and after RbfA during the maturation of 16S rRNA. It has affinity for free ribosomal 30S subunits but not for 70S ribosomes. In Natranaerobius thermophilus (strain ATCC BAA-1301 / DSM 18059 / JW/NM-WN-LF), this protein is Ribosome maturation factor RimM.